Reading from the N-terminus, the 208-residue chain is Pyridoxine/pyridoxamine 5'-phosphate oxidase (208 aa).

Residues 55–60 (RMVLLK), 70–71 (YT), Lys77, and Gln99 contribute to the FMN site. Lys60 lines the substrate pocket. The substrate site is built by Tyr117, Arg121, and Ser125. Residues 134–135 (QS) and Trp180 each bind FMN. 186-188 (RIH) is a binding site for substrate. An FMN-binding site is contributed by Arg190.

This sequence belongs to the pyridoxamine 5'-phosphate oxidase family. In terms of assembly, homodimer. The cofactor is FMN.

It carries out the reaction pyridoxamine 5'-phosphate + O2 + H2O = pyridoxal 5'-phosphate + H2O2 + NH4(+). The enzyme catalyses pyridoxine 5'-phosphate + O2 = pyridoxal 5'-phosphate + H2O2. It functions in the pathway cofactor metabolism; pyridoxal 5'-phosphate salvage; pyridoxal 5'-phosphate from pyridoxamine 5'-phosphate: step 1/1. Its pathway is cofactor metabolism; pyridoxal 5'-phosphate salvage; pyridoxal 5'-phosphate from pyridoxine 5'-phosphate: step 1/1. Functionally, catalyzes the oxidation of either pyridoxine 5'-phosphate (PNP) or pyridoxamine 5'-phosphate (PMP) into pyridoxal 5'-phosphate (PLP). This Pelagibacter ubique (strain HTCC1062) protein is Pyridoxine/pyridoxamine 5'-phosphate oxidase.